Consider the following 273-residue polypeptide: UPF0380 protein YfjQ (273 aa).

This sequence belongs to the UPF0380 family.

This is UPF0380 protein YfjQ (yfjQ) from Escherichia coli (strain K12).